Reading from the N-terminus, the 119-residue chain is Holo-[acyl-carrier-protein] synthase (119 aa).

Mg(2+) is bound by residues D8 and E58.

This sequence belongs to the P-Pant transferase superfamily. AcpS family. It depends on Mg(2+) as a cofactor.

It is found in the cytoplasm. It catalyses the reaction apo-[ACP] + CoA = holo-[ACP] + adenosine 3',5'-bisphosphate + H(+). Transfers the 4'-phosphopantetheine moiety from coenzyme A to a Ser of acyl-carrier-protein. In Streptococcus mutans serotype c (strain ATCC 700610 / UA159), this protein is Holo-[acyl-carrier-protein] synthase.